The primary structure comprises 239 residues: Segregation and condensation protein A (239 aa).

It belongs to the ScpA family. Component of a cohesin-like complex composed of ScpA, ScpB and the Smc homodimer, in which ScpA and ScpB bind to the head domain of Smc. The presence of the three proteins is required for the association of the complex with DNA.

The protein localises to the cytoplasm. Functionally, participates in chromosomal partition during cell division. May act via the formation of a condensin-like complex containing Smc and ScpB that pull DNA away from mid-cell into both cell halves. The sequence is that of Segregation and condensation protein A from Streptococcus suis (strain 98HAH33).